The primary structure comprises 319 residues: Olfactory receptor 51F1 (319 aa).

Residues 1 to 37 (MLQNQDTMEILSNSTSKFPTFLLTGIPGLESAHVWIS) are Extracellular-facing. A helical transmembrane segment spans residues 38–58 (IPFCCFYAIALSGNSVILFVI). Residues 59–75 (ITQQSLHEPMYYFLFRL) are Cytoplasmic-facing. Residues 76-96 (SATDLGLTVSSLSTTLGILWF) traverse the membrane as a helical segment. The Extracellular portion of the chain corresponds to 97 to 106 (EAREISLYSC). A disulfide bridge links cysteine 106 with cysteine 188. The chain crosses the membrane as a helical span at residues 107 to 127 (IVQMFFLHGFTFMESGVLVAT). At 128–149 (AFDRYVAICDPLRYTTILTNSR) the chain is on the cytoplasmic side. The chain crosses the membrane as a helical span at residues 150-170 (IIQMGLLMITRAIVLILPLLL). Topologically, residues 171–211 (LLKPLYFCRMNALSHSYCYHPDVIQLACSDIRANSICGLID) are extracellular. The chain crosses the membrane as a helical span at residues 212 to 232 (LILTTGIDTPCIVLSYILIIH). At 233-249 (SVLRIASPEEWHKVFST) the chain is on the cytoplasmic side. The chain crosses the membrane as a helical span at residues 250–270 (CVSHVGAVAFFYIHMLSLSLV). The Extracellular portion of the chain corresponds to 271–279 (YRYGRSAPR). Residues 280–300 (VVHSVMANVYLLLPPVLNPII) traverse the membrane as a helical segment. At 301-319 (DSVKTKQIRKAMLSLLLTK) the chain is on the cytoplasmic side.

This sequence belongs to the G-protein coupled receptor 1 family.

Its subcellular location is the cell membrane. In terms of biological role, odorant receptor. In Homo sapiens (Human), this protein is Olfactory receptor 51F1 (OR51F1).